The sequence spans 421 residues: tRNA (guanine-N(7)-)-methyltransferase non-catalytic subunit TRM82 (421 aa).

WD repeat units follow at residues 72–112, 170–212, and 216–258; these read AVYS…EDPE, GHVS…IVDK, and GHKE…SQYS.

The protein belongs to the WD repeat TRM82 family. As to quaternary structure, forms a heterodimer with the catalytic subunit TRM8.

It localises to the nucleus. It participates in tRNA modification; N(7)-methylguanine-tRNA biosynthesis. In terms of biological role, required for the formation of N(7)-methylguanine at position 46 (m7G46) in tRNA. In the complex, it is required to stabilize and induce conformational changes of the catalytic subunit. This is tRNA (guanine-N(7)-)-methyltransferase non-catalytic subunit TRM82 from Candida glabrata (strain ATCC 2001 / BCRC 20586 / JCM 3761 / NBRC 0622 / NRRL Y-65 / CBS 138) (Yeast).